A 270-amino-acid chain; its full sequence is Bis(5'-nucleosyl)-tetraphosphatase, symmetrical (270 aa).

Belongs to the Ap4A hydrolase family.

The catalysed reaction is P(1),P(4)-bis(5'-adenosyl) tetraphosphate + H2O = 2 ADP + 2 H(+). In terms of biological role, hydrolyzes diadenosine 5',5'''-P1,P4-tetraphosphate to yield ADP. This is Bis(5'-nucleosyl)-tetraphosphatase, symmetrical from Actinobacillus pleuropneumoniae serotype 3 (strain JL03).